The chain runs to 269 residues: Type II iodothyronine deiodinase (269 aa).

At 1 to 9 (MGILSVDLL) the chain is on the lumenal side. The helical; Signal-anchor for type III membrane protein transmembrane segment at 10 to 34 (ITLQILPVFFSNCLFLALYDSVILL) threads the bilayer. Topologically, residues 35 to 269 (KHVVLLLSRS…KNFSKRUKKT (235 aa)) are cytoplasmic. U133 is a catalytic residue. 2 non-standard amino acids (selenocysteine) are found at residues U133 and U266.

Belongs to the iodothyronine deiodinase family. In terms of assembly, predominantly monomer. Can form homodimers but homodimerization is not essential for enzyme activity. Interacts with USP20 and USP33. Interacts with MARCHF6. Post-translationally, ubiquitinated by MARCHF6, leading to its degradation by the proteasome. Deubiquitinated by USP20 and USP33. As to expression, more expressed in pituitary than in brain, low to undetectable levels in thyroid and skeletal muscle.

Its subcellular location is the endoplasmic reticulum membrane. It catalyses the reaction 3,3',5-triiodo-L-thyronine + iodide + A + H(+) = L-thyroxine + AH2. The catalysed reaction is 3,3'-diiodo-L-thyronine + iodide + A + H(+) = 3,3',5'-triiodo-L-thyronine + AH2. It carries out the reaction 3'-iodo-L-thyronine + iodide + A + H(+) = 3',5'-diiodo-L-thyronine + AH2. The enzyme catalyses 3,3'-diiodothyronamine + iodide + A + H(+) = 3,3',5'-triiodothyronamine + AH2. It catalyses the reaction 3'-iodothyronamine + iodide + A + H(+) = 3',5'-diiodothyronamine + AH2. Plays a crucial role in the metabolism of thyroid hormones (TH) and has specific roles in TH activation and inactivation by deiodination.Catalyzes the deiodination of L-thyroxine (T4) to 3,5,3'-triiodothyronine (T3) and 3,3',5'-triiodothyronine (rT3) to 3,3'-diiodothyronine (3,3'-T2) via outer-ring deiodination (ORD). Catalyzes the deiodination of 3',5'-diiodothyronine (3',5'-T2) to 3'-monoiodothyronine (3'-T1) via ORD. Catalyzes the phenolic ring deiodinations of 3,3',5'-triiodothyronamine and 3',5'- diiodothyronamine. This Sus scrofa (Pig) protein is Type II iodothyronine deiodinase (DIO2).